An 86-amino-acid polypeptide reads, in one-letter code: Cell division topological specificity factor (86 aa).

Belongs to the MinE family.

Its function is as follows. Prevents the cell division inhibition by proteins MinC and MinD at internal division sites while permitting inhibition at polar sites. This ensures cell division at the proper site by restricting the formation of a division septum at the midpoint of the long axis of the cell. The polypeptide is Cell division topological specificity factor (Shewanella loihica (strain ATCC BAA-1088 / PV-4)).